The following is a 308-amino-acid chain: MDDENATLLTEFVLTGLTYQSEWKIPLFLAFLVIYLITIMANLGLIAVIWKDSHLHIPMYLFLGSLAFVDAWLSSSVTPKMLISFLAKSMIISVSECKIQFFSFGISGTTECFLLATMAYDRYVAICKPLLYPVIMTNGLCIWLLVLSFIGGFLHALIHEGILFRLTFCNSNIIHHFYCDIIPLLKISCTDPSINFLMLFILSGSIQVFTILTVLVSYTFVLFTILKKKAKDIRKAFSTCGAHLLSVSLYYGPLLFMYVHPASPQADDQDMVESLFYTVIIPFLNPIIYSLRNKQVIDSLTKTLKGNV.

The Extracellular portion of the chain corresponds to methionine 1–phenylalanine 28. Residues leucine 29–isoleucine 49 traverse the membrane as a helical segment. At tryptophan 50–histidine 56 the chain is on the cytoplasmic side. The helical transmembrane segment at isoleucine 57–valine 77 threads the bilayer. Residues threonine 78–lysine 98 lie on the Extracellular side of the membrane. Residues cysteine 97 and cysteine 179 are joined by a disulfide bond. Residues isoleucine 99 to alanine 119 form a helical membrane-spanning segment. The Cytoplasmic portion of the chain corresponds to tyrosine 120–proline 133. Residues valine 134–leucine 154 form a helical membrane-spanning segment. Residues histidine 155–asparagine 195 lie on the Extracellular side of the membrane. The helical transmembrane segment at phenylalanine 196–valine 216 threads the bilayer. The Cytoplasmic portion of the chain corresponds to serine 217–serine 238. The chain crosses the membrane as a helical span at residues threonine 239 to valine 259. Residues histidine 260–aspartate 270 lie on the Extracellular side of the membrane. A helical transmembrane segment spans residues methionine 271–leucine 291. Over arginine 292–valine 308 the chain is Cytoplasmic.

This sequence belongs to the G-protein coupled receptor 1 family.

It is found in the cell membrane. Its function is as follows. Odorant receptor. This Homo sapiens (Human) protein is Olfactory receptor 5H8.